Here is a 420-residue protein sequence, read N- to C-terminus: Histidine--tRNA ligase (420 aa).

It belongs to the class-II aminoacyl-tRNA synthetase family. Homodimer.

It is found in the cytoplasm. The catalysed reaction is tRNA(His) + L-histidine + ATP = L-histidyl-tRNA(His) + AMP + diphosphate + H(+). This chain is Histidine--tRNA ligase, found in Macrococcus caseolyticus (strain JCSC5402) (Macrococcoides caseolyticum).